A 501-amino-acid chain; its full sequence is MVLWGPVLGVLLVAIVGYLCLQGLLRQRRPEEPPLDKGSVPWLGHAMTFRKNMLEFLKHMWARHGDIFTVQLGGQYFTFVMDPLSFGPILKDAKRKLDFVEYAEKLVLKVFGYRSMQGDHRMIHSASTKHLMGDGLEELNKAMLDNLSLVMLGPKGPSPDASCWREDGLFHFCYDILFKAGYLSLFGRTEDKEQDLLQAEELFMQFRKFDRMFPRFVYSLLGPREWLEVGRLQCLFHKMLSVEHSLERHGISSWITDMLQVLREQGVAPAMQDKFNFMMLWASQGNTGPTTFWALLFLLKHPEAMRAVREEATRVLGEARLEDKQSFDVEVSALNHMPVLDSVMEETLRLGAAPTLLRVVNSDQILKMASGQEYRLRHGDILALFPYLSVHMDPDIHPEPTTFKYDRFLTPSGSRKVNFYKAGKKIHHYTMPWGSGISICPGRFFALTEMKLFVLLMVTHFDLELVDPDTPVPPVDPQRWGFGTMQPSYEVRFRYRLRPTE.

A helical membrane pass occupies residues 1 to 21 (MVLWGPVLGVLLVAIVGYLCL). Phosphoserine is present on S326. C440 is a binding site for heme.

This sequence belongs to the cytochrome P450 family. Heme serves as cofactor.

It localises to the endoplasmic reticulum membrane. The protein resides in the microsome membrane. It catalyses the reaction 7alpha-hydroxycholest-4-en-3-one + reduced [NADPH--hemoprotein reductase] + O2 = 7alpha,12alpha-dihydroxycholest-4-en-3-one + oxidized [NADPH--hemoprotein reductase] + H2O + H(+). The catalysed reaction is 5beta-cholestane-3alpha,7alpha-diol + reduced [NADPH--hemoprotein reductase] + O2 = 5beta-cholestane-3alpha,7alpha,12alpha-triol + oxidized [NADPH--hemoprotein reductase] + H2O + H(+). It carries out the reaction chenodeoxycholate + reduced [NADPH--hemoprotein reductase] + O2 = cholate + oxidized [NADPH--hemoprotein reductase] + H2O + H(+). Its pathway is lipid metabolism; bile acid biosynthesis. Functionally, a cytochrome P450 monooxygenase involved in primary bile acid biosynthesis. Catalyzes the 12alpha-hydroxylation of 7alpha-hydroxy-4-cholesten-3-one, an intermediate metabolite in cholic acid biosynthesis. Controls biliary balance of cholic acid and chenodeoxycholic acid, ultimately regulating the intestinal absorption of dietary lipids. Mechanistically, uses molecular oxygen inserting one oxygen atom into a substrate, and reducing the second into a water molecule, with two electrons provided by NADPH via cytochrome P450 reductase (CPR; NADPH--hemoprotein reductase). This chain is 5-beta-cholestane-3-alpha,7-alpha-diol 12-alpha-hydroxylase (CYP8B1), found in Sus scrofa (Pig).